The sequence spans 619 residues: Translation initiation factor IF-2 (619 aa).

The tr-type G domain maps to 120 to 289; that stretch reads PRPPIVTIMG…ILLLGEVEGY (170 aa). The interval 129–136 is G1; it reads GHVDHGKT. A GTP-binding site is contributed by 129–136; sequence GHVDHGKT. The segment at 154–158 is G2; that stretch reads GITQK. Residues 176–179 are G3; sequence DTPG. Residues 176 to 180 and 230 to 233 contribute to the GTP site; these read DTPGH and NKMD. Residues 230 to 233 are G4; that stretch reads NKMD. The G5 stretch occupies residues 266 to 268; the sequence is SAL.

Belongs to the TRAFAC class translation factor GTPase superfamily. Classic translation factor GTPase family. IF-2 subfamily.

It localises to the cytoplasm. In terms of biological role, one of the essential components for the initiation of protein synthesis. Protects formylmethionyl-tRNA from spontaneous hydrolysis and promotes its binding to the 30S ribosomal subunits. Also involved in the hydrolysis of GTP during the formation of the 70S ribosomal complex. The protein is Translation initiation factor IF-2 (infB) of Mycoplasma genitalium (strain ATCC 33530 / DSM 19775 / NCTC 10195 / G37) (Mycoplasmoides genitalium).